The chain runs to 88 residues: Small ribosomal subunit protein uS15c (88 aa).

This sequence belongs to the universal ribosomal protein uS15 family. In terms of assembly, part of the 30S ribosomal subunit.

It localises to the plastid. Its subcellular location is the chloroplast. The chain is Small ribosomal subunit protein uS15c (rps15) from Angiopteris evecta (Mule's foot fern).